The chain runs to 116 residues: Large ribosomal subunit protein bL17 (116 aa).

Belongs to the bacterial ribosomal protein bL17 family. In terms of assembly, part of the 50S ribosomal subunit. Contacts protein L32.

The sequence is that of Large ribosomal subunit protein bL17 from Synechococcus sp. (strain CC9902).